A 157-amino-acid polypeptide reads, in one-letter code: Phosphopantetheine adenylyltransferase (157 aa).

T10 is a binding site for substrate. ATP contacts are provided by residues 10–11 (TF) and H18. Residues K42, L74, and R88 each coordinate substrate. ATP is bound by residues 89–91 (GLR), E99, and 124–130 (NAFISSS).

Belongs to the bacterial CoaD family. In terms of assembly, homohexamer. Requires Mg(2+) as cofactor.

The protein localises to the cytoplasm. It carries out the reaction (R)-4'-phosphopantetheine + ATP + H(+) = 3'-dephospho-CoA + diphosphate. The protein operates within cofactor biosynthesis; coenzyme A biosynthesis; CoA from (R)-pantothenate: step 4/5. Reversibly transfers an adenylyl group from ATP to 4'-phosphopantetheine, yielding dephospho-CoA (dPCoA) and pyrophosphate. This is Phosphopantetheine adenylyltransferase from Helicobacter pylori (strain J99 / ATCC 700824) (Campylobacter pylori J99).